A 205-amino-acid chain; its full sequence is Protein GrpE (205 aa).

Belongs to the GrpE family. In terms of assembly, homodimer.

It is found in the cytoplasm. Participates actively in the response to hyperosmotic and heat shock by preventing the aggregation of stress-denatured proteins, in association with DnaK and GrpE. It is the nucleotide exchange factor for DnaK and may function as a thermosensor. Unfolded proteins bind initially to DnaJ; upon interaction with the DnaJ-bound protein, DnaK hydrolyzes its bound ATP, resulting in the formation of a stable complex. GrpE releases ADP from DnaK; ATP binding to DnaK triggers the release of the substrate protein, thus completing the reaction cycle. Several rounds of ATP-dependent interactions between DnaJ, DnaK and GrpE are required for fully efficient folding. The sequence is that of Protein GrpE from Shewanella loihica (strain ATCC BAA-1088 / PV-4).